Here is a 438-residue protein sequence, read N- to C-terminus: Trigger factor (438 aa).

The region spanning 160–245 is the PPIase FKBP-type domain; it reads DDKVTIDFVG…VKKIQQAELP (86 aa).

The protein belongs to the FKBP-type PPIase family. Tig subfamily.

The protein localises to the cytoplasm. It carries out the reaction [protein]-peptidylproline (omega=180) = [protein]-peptidylproline (omega=0). Functionally, involved in protein export. Acts as a chaperone by maintaining the newly synthesized protein in an open conformation. Functions as a peptidyl-prolyl cis-trans isomerase. In Francisella tularensis subsp. mediasiatica (strain FSC147), this protein is Trigger factor.